Here is a 399-residue protein sequence, read N- to C-terminus: Argininosuccinate synthase (399 aa).

Ala8–Ser16 is an ATP binding site. Tyr87 serves as a coordination point for L-citrulline. Gly117 serves as a coordination point for ATP. Thr119, Asn123, and Asp124 together coordinate L-aspartate. Residue Asn123 participates in L-citrulline binding. Residues Arg127, Ser175, Glu260, and Tyr272 each coordinate L-citrulline.

Belongs to the argininosuccinate synthase family. Type 1 subfamily. As to quaternary structure, homotetramer.

It is found in the cytoplasm. The enzyme catalyses L-citrulline + L-aspartate + ATP = 2-(N(omega)-L-arginino)succinate + AMP + diphosphate + H(+). The protein operates within amino-acid biosynthesis; L-arginine biosynthesis; L-arginine from L-ornithine and carbamoyl phosphate: step 2/3. The chain is Argininosuccinate synthase from Mycolicibacterium smegmatis (strain ATCC 700084 / mc(2)155) (Mycobacterium smegmatis).